The sequence spans 879 residues: Bifunctional uridylyltransferase/uridylyl-removing enzyme (879 aa).

The tract at residues 1–340 is uridylyltransferase; that stretch reads MANVQEDKDF…GTQDLQHAEH (340 aa). Residues 341–700 are uridylyl-removing; sequence ISDDFAVANK…IGDENNYGTT (360 aa). Residues 458–580 form the HD domain; sequence VDEHTFRLVR…VSTPERLDYL (123 aa). 2 ACT domains span residues 701-782 and 809-879; these read ELFI…STKR and TFEL…DLEF.

Belongs to the GlnD family. Mg(2+) serves as cofactor.

It carries out the reaction [protein-PII]-L-tyrosine + UTP = [protein-PII]-uridylyl-L-tyrosine + diphosphate. It catalyses the reaction [protein-PII]-uridylyl-L-tyrosine + H2O = [protein-PII]-L-tyrosine + UMP + H(+). Its activity is regulated as follows. Uridylyltransferase (UTase) activity is inhibited by glutamine, while glutamine activates uridylyl-removing (UR) activity. Functionally, modifies, by uridylylation and deuridylylation, the PII regulatory proteins (GlnB and homologs), in response to the nitrogen status of the cell that GlnD senses through the glutamine level. Under low glutamine levels, catalyzes the conversion of the PII proteins and UTP to PII-UMP and PPi, while under higher glutamine levels, GlnD hydrolyzes PII-UMP to PII and UMP (deuridylylation). Thus, controls uridylylation state and activity of the PII proteins, and plays an important role in the regulation of nitrogen assimilation and metabolism. The chain is Bifunctional uridylyltransferase/uridylyl-removing enzyme from Idiomarina loihiensis (strain ATCC BAA-735 / DSM 15497 / L2-TR).